The primary structure comprises 1680 residues: Alpha-protein kinase 3 (1680 aa).

The tract at residues 1-37 is disordered; sequence MGSRRAAGRGWGLGGRAGAGGDSEDDGPVWTPGPASR. A compositionally biased stretch (gly residues) spans 9-21; sequence RGWGLGGRAGAGG. Residues 77-173 form the Ig-like 1 domain; it reads PLFETTLKSR…SGVLEVGTMT (97 aa). Ser229 is subject to Phosphoserine. 5 disordered regions span residues 237–288, 302–759, 785–950, 1078–1128, and 1147–1244; these read STPV…NGED, ELGP…CPRE, SEEA…GTRS, EGSA…LTGL, and PKVR…QRKA. Residues 320–337 show a composition bias toward basic and acidic residues; that stretch reads KDEESKPGEQKLELEKAE. Positions 339–353 are enriched in polar residues; that stretch reads SQCSSENVVPSTDKP. Residues 402-426 show a composition bias toward pro residues; the sequence is APAPAPVPAPALAPAPVPVPAPTPV. Positions 514–532 are enriched in low complexity; that stretch reads ESTTTSLSSQTSESMAQSL. Polar residues-rich tracts occupy residues 557–566 and 731–744; these read SPLQGQTSHK and ETQS…SLSS. Basic and acidic residues predominate over residues 785–796; it reads SEEAAFRSHEDG. The span at 917 to 932 shows a compositional bias: polar residues; sequence SPTQSHPPEAMATSSE. 2 stretches are compositionally biased toward basic and acidic residues: residues 1087–1111 and 1151–1165; these read ERTS…ESRT and AGSD…ERES. Residue Ser1199 is modified to Phosphoserine. Basic and acidic residues predominate over residues 1231–1244; that stretch reads DEGKQEALAKQRKA. In terms of domain architecture, Ig-like 2 spans 1251-1339; the sequence is PQVIRKIRVE…GSASTDFCLS (89 aa). Cys1273 and Cys1323 form a disulfide bridge. One can recognise an Alpha-type protein kinase domain in the interval 1367–1600; the sequence is KGLADSGCWG…YCDMLGLKPL (234 aa). The interval 1603–1680 is disordered; that stretch reads PEAAHPQAKA…DGSSKAQSMR (78 aa). Composition is skewed to polar residues over residues 1639-1660 and 1671-1680; these read PQGS…QAAT and DGSSKAQSMR.

Belongs to the protein kinase superfamily. Alpha-type protein kinase family. ALPK subfamily. In terms of tissue distribution, expressed in the heart and skeletal muscle of adult mice.

It is found in the nucleus. It carries out the reaction L-seryl-[protein] + ATP = O-phospho-L-seryl-[protein] + ADP + H(+). The catalysed reaction is L-threonyl-[protein] + ATP = O-phospho-L-threonyl-[protein] + ADP + H(+). Its function is as follows. Involved in cardiomyocyte differentiation. The protein is Alpha-protein kinase 3 of Mus musculus (Mouse).